A 1221-amino-acid polypeptide reads, in one-letter code: Reverse gyrase subunit B (1221 aa).

The segment at 56–97 adopts an RG N-terminal-type zinc-finger fold; sequence NEPVAIFGSSCVLCGGDCSSVRLTSRIGICERCLPVDTETLR. Positions 66, 69, 85, and 88 each coordinate Zn(2+). ATP is bound by residues Gln-161 and 178–185; that span reads APTGTGKT. Positions 165–400 constitute a Helicase ATP-binding domain; the sequence is TRRLVKGCSF…AVVRELFDFE (236 aa). The DEAD box signature appears at 284-287; the sequence is DDVD. The region spanning 424–600 is the Helicase C-terminal domain; the sequence is AVERIVRKAG…PLSLNTLMKL (177 aa). One can recognise a Toprim domain in the interval 779-935; it reads SALMIVESPN…QVYRTEFHEV (157 aa). Mg(2+) is bound at residue Glu-785. An RG C-terminal-type zinc finger spans residues 856–882; that stretch reads LGRCSECGEQVVGSEECPNCGGEVELK. Zn(2+) contacts are provided by Cys-859, Cys-862, Cys-872, and Cys-875. Asp-904 contributes to the Mg(2+) binding site. A Topo IA-type catalytic domain is found at 953–1221; it reads DAGRVSAQIL…MLHLAGVSGR (269 aa).

This sequence in the C-terminal section; belongs to the type IA topoisomerase family. It in the N-terminal section; belongs to the DEAD box helicase family. DDVD subfamily. In terms of assembly, heterodimer of an RgyrA and RgyrB subunit. The topoisomerase domain is shared between the two subunits. Requires Zn(2+) as cofactor. Mg(2+) is required as a cofactor. In terms of processing, the N-terminus is partially blocked.

The protein resides in the cytoplasm. It catalyses the reaction ATP + H2O = ADP + phosphate + H(+). Functionally, modifies the topological state of DNA by introducing positive supercoils in an ATP-dependent process; dATP also allows positive supercoiling. Increases the linking number in steps of +1. Only this subunit binds ATP, it does so in a DNA- and RgyA-independent manner. Hydrolyzes ATP only in the presence of DNA. The RgyA subunit transiently cleaves a single DNA strand and remains covalently bound to the 5' DNA end probably through a tyrosine residue. It changes linking number in steps of one, and nicks DNA preferentially at 5'-CNNN | 3'-sites with a strong preference for 4 pyrimidine residues. There are about 1000 heterodimers per cell. May be involved in rewinding the DNA strands in the regions of the chromosome that have opened up to allow transcription or replication. In terms of biological role, this subunit expressed in E.coli only has DNA-dependent ATPase activity at 80 degrees Celsius. Reverse gyrase activity is reconstituted after incubation at 80 degrees Celsius for 5 minutes, positive supercoiling requires ATP and Mg(2+). In the presence of ATP it binds and nicks substrate but does not make closed product. The sequence is that of Reverse gyrase subunit B from Methanopyrus kandleri (strain AV19 / DSM 6324 / JCM 9639 / NBRC 100938).